A 239-amino-acid polypeptide reads, in one-letter code: MATPHINAEMGDFADVVLMPGDPLRAKHIAETFLEDVREVNNVRGMLGFTGTYKGRKISVMGHGMGIPSCSIYTKELITDFGVKKIIRVGSCGAVRNDVKLRDVVIGMGACTDSKVNRIRFKDHDFAAIADFDMVRNAVDAAKALGVDARVGNLFSADLFYSPDGEMFDVMEKYGILGVEMEAAGIYGVAAEFGAKALTICTVSDHIRTHEQTTAAERQTTFNDMIKIALESVLLGDKA.

Residue H5 coordinates a purine D-ribonucleoside. Residues G21, R25, R44, and 88–91 each bind phosphate; that span reads RVGS. A purine D-ribonucleoside is bound by residues 180 to 182 and 204 to 205; these read EME and SD. Residue D205 is the Proton donor of the active site.

It belongs to the PNP/UDP phosphorylase family. In terms of assembly, homohexamer; trimer of homodimers.

The catalysed reaction is a purine D-ribonucleoside + phosphate = a purine nucleobase + alpha-D-ribose 1-phosphate. It catalyses the reaction a purine 2'-deoxy-D-ribonucleoside + phosphate = a purine nucleobase + 2-deoxy-alpha-D-ribose 1-phosphate. Its function is as follows. Catalyzes the reversible phosphorolytic breakdown of the N-glycosidic bond in the beta-(deoxy)ribonucleoside molecules, with the formation of the corresponding free purine bases and pentose-1-phosphate. The sequence is that of Purine nucleoside phosphorylase DeoD-type from Citrobacter koseri (strain ATCC BAA-895 / CDC 4225-83 / SGSC4696).